Reading from the N-terminus, the 203-residue chain is Urease accessory protein UreG (203 aa).

14–21 (GPVGSGKT) is a binding site for GTP.

Belongs to the SIMIBI class G3E GTPase family. UreG subfamily. Homodimer. UreD, UreF and UreG form a complex that acts as a GTP-hydrolysis-dependent molecular chaperone, activating the urease apoprotein by helping to assemble the nickel containing metallocenter of UreC. The UreE protein probably delivers the nickel.

It is found in the cytoplasm. In terms of biological role, facilitates the functional incorporation of the urease nickel metallocenter. This process requires GTP hydrolysis, probably effectuated by UreG. In Rhizobium johnstonii (strain DSM 114642 / LMG 32736 / 3841) (Rhizobium leguminosarum bv. viciae), this protein is Urease accessory protein UreG.